The sequence spans 170 residues: Keratin-associated protein 9-2 (170 aa).

17 consecutive repeat copies span residues Cys-8–Thr-12, Cys-13–Thr-17, Cys-18–Thr-22, Cys-37–Thr-41, Cys-42–Ser-46, Cys-51–Thr-55, Cys-61–Thr-65, Cys-66–Thr-70, Cys-75–Ser-79, Cys-80–Pro-84, Cys-85–Thr-89, Cys-90–Ser-94, Cys-95–Thr-99, Cys-140–Ala-144, Cys-145–Thr-149, Cys-150–Thr-154, and Cys-164–Ser-168. Residues Cys-8–Ser-168 are 17 X 5 AA repeats of C-C-[RQVSGE]-[SPTQ]-[TASP].

This sequence belongs to the KRTAP type 9 family. Interacts with hair keratins.

Its function is as follows. In the hair cortex, hair keratin intermediate filaments are embedded in an interfilamentous matrix, consisting of hair keratin-associated proteins (KRTAP), which are essential for the formation of a rigid and resistant hair shaft through their extensive disulfide bond cross-linking with abundant cysteine residues of hair keratins. The matrix proteins include the high-sulfur and high-glycine-tyrosine keratins. The sequence is that of Keratin-associated protein 9-2 (KRTAP9-2) from Pan troglodytes (Chimpanzee).